A 189-amino-acid polypeptide reads, in one-letter code: Adenylate kinase (189 aa).

Glycine 11 to threonine 16 is an ATP binding site. Positions serine 31–leucine 60 are NMP. Residues threonine 32, arginine 37, glutamine 58–leucine 60, glycine 86–arginine 89, and glutamine 93 contribute to the AMP site. Residues lysine 127–aspartate 137 form an LID region. Arginine 128 serves as a coordination point for ATP. AMP-binding residues include arginine 134 and arginine 145. Glycine 173 provides a ligand contact to ATP.

The protein belongs to the adenylate kinase family. In terms of assembly, monomer.

It localises to the cytoplasm. The enzyme catalyses AMP + ATP = 2 ADP. Its pathway is purine metabolism; AMP biosynthesis via salvage pathway; AMP from ADP: step 1/1. Functionally, catalyzes the reversible transfer of the terminal phosphate group between ATP and AMP. Plays an important role in cellular energy homeostasis and in adenine nucleotide metabolism. This Phocaeicola vulgatus (strain ATCC 8482 / DSM 1447 / JCM 5826 / CCUG 4940 / NBRC 14291 / NCTC 11154) (Bacteroides vulgatus) protein is Adenylate kinase.